The following is a 610-amino-acid chain: Alpha-fetoprotein (610 aa).

An N-terminal signal peptide occupies residues 1–18; that stretch reads MKWVVSFFLLFLLNFSDS. Albumin domains are found at residues 19 to 210, 211 to 403, and 404 to 602; these read RTMH…TSIT, KELR…EELE, and KYIQ…ALIS. Residue H22 coordinates Cu(2+). 8 disulfides stabilise this stretch: C99–C114, C113–C124, C148–C193, C192–C201, C224–C270, C269–C277, C289–C303, and C302–C314. Phosphoserine is present on residues S111 and S115. N-linked (GlcNAc...) asparagine glycosylation is found at N197 and N251. Residue S345 is modified to Phosphoserine. Intrachain disulfides connect C385–C394, C417–C463, C462–C473, C486–C502, C501–C512, C539–C584, and C583–C592. Residue S445 is modified to Phosphoserine.

This sequence belongs to the ALB/AFP/VDB family. In terms of assembly, dimeric and trimeric forms have been found in addition to the monomeric form. Post-translationally, sulfated. As to expression, plasma.

The protein resides in the secreted. Its function is as follows. Binds copper, nickel, and fatty acids as well as, and bilirubin less well than, serum albumin. In Bos taurus (Bovine), this protein is Alpha-fetoprotein (AFP).